The sequence spans 90 residues: Small ribosomal subunit protein uS17 (90 aa).

The protein belongs to the universal ribosomal protein uS17 family. In terms of assembly, part of the 30S ribosomal subunit.

In terms of biological role, one of the primary rRNA binding proteins, it binds specifically to the 5'-end of 16S ribosomal RNA. The protein is Small ribosomal subunit protein uS17 of Treponema denticola (strain ATCC 35405 / DSM 14222 / CIP 103919 / JCM 8153 / KCTC 15104).